A 152-amino-acid polypeptide reads, in one-letter code: SsrA-binding protein (152 aa).

The protein belongs to the SmpB family.

Its subcellular location is the cytoplasm. Functionally, required for rescue of stalled ribosomes mediated by trans-translation. Binds to transfer-messenger RNA (tmRNA), required for stable association of tmRNA with ribosomes. tmRNA and SmpB together mimic tRNA shape, replacing the anticodon stem-loop with SmpB. tmRNA is encoded by the ssrA gene; the 2 termini fold to resemble tRNA(Ala) and it encodes a 'tag peptide', a short internal open reading frame. During trans-translation Ala-aminoacylated tmRNA acts like a tRNA, entering the A-site of stalled ribosomes, displacing the stalled mRNA. The ribosome then switches to translate the ORF on the tmRNA; the nascent peptide is terminated with the 'tag peptide' encoded by the tmRNA and targeted for degradation. The ribosome is freed to recommence translation, which seems to be the essential function of trans-translation. The protein is SsrA-binding protein of Rickettsia peacockii (strain Rustic).